The chain runs to 301 residues: GTPase Era (301 aa).

An Era-type G domain is found at 7-175; the sequence is YCGFIAIVGR…AAIVRKHLPE (169 aa). Positions 15–22 are G1; that stretch reads GRPNVGKS. 15–22 lines the GTP pocket; sequence GRPNVGKS. Residues 41–45 are G2; it reads QTTRH. A G3 region spans residues 62–65; it reads DTPG. GTP-binding positions include 62–66 and 124–127; these read DTPGL and NKVD. Residues 124 to 127 are G4; the sequence is NKVD. Residues 154-156 are G5; that stretch reads ISA. The region spanning 206-283 is the KH type-2 domain; the sequence is LGAELPYSVT…HLELWVKVKS (78 aa).

This sequence belongs to the TRAFAC class TrmE-Era-EngA-EngB-Septin-like GTPase superfamily. Era GTPase family. In terms of assembly, monomer.

The protein localises to the cytoplasm. The protein resides in the cell inner membrane. An essential GTPase that binds both GDP and GTP, with rapid nucleotide exchange. Plays a role in 16S rRNA processing and 30S ribosomal subunit biogenesis and possibly also in cell cycle regulation and energy metabolism. This chain is GTPase Era, found in Shigella flexneri.